The sequence spans 338 residues: Lipoate-protein ligase A (338 aa).

One can recognise a BPL/LPL catalytic domain in the interval Pro29–Val216. ATP contacts are provided by residues Arg71, Gly76 to Phe79, and Lys134. Lys134 is a binding site for (R)-lipoate.

This sequence belongs to the LplA family. Monomer.

It is found in the cytoplasm. It catalyses the reaction L-lysyl-[lipoyl-carrier protein] + (R)-lipoate + ATP = N(6)-[(R)-lipoyl]-L-lysyl-[lipoyl-carrier protein] + AMP + diphosphate + H(+). Its pathway is protein modification; protein lipoylation via exogenous pathway; protein N(6)-(lipoyl)lysine from lipoate: step 1/2. It participates in protein modification; protein lipoylation via exogenous pathway; protein N(6)-(lipoyl)lysine from lipoate: step 2/2. Its function is as follows. Catalyzes both the ATP-dependent activation of exogenously supplied lipoate to lipoyl-AMP and the transfer of the activated lipoyl onto the lipoyl domains of lipoate-dependent enzymes. The protein is Lipoate-protein ligase A of Escherichia fergusonii (strain ATCC 35469 / DSM 13698 / CCUG 18766 / IAM 14443 / JCM 21226 / LMG 7866 / NBRC 102419 / NCTC 12128 / CDC 0568-73).